The chain runs to 1123 residues: Translation initiation factor IF-2 (1123 aa).

Disordered stretches follow at residues 52-452 (LLKA…KVHI) and 480-512 (LARPSKPKSQQKAAPKPVAAMRKRRKETTRQRQ). Low complexity-rich tracts occupy residues 54–73 (KAGSAPRAAASPSKPAPGKA), 94–113 (KPAASSPPAAPAAPTKAKSP), and 121–133 (AAPSRPAAPKASA). Positions 170–187 (PPSPPARPVPQQPSPPSA) are enriched in pro residues. Residues 193–206 (APIRRAAPNDAPRP) show a composition bias toward low complexity. Pro residues-rich tracts occupy residues 207-217 (ANAPPSRPQPK) and 258-268 (SPRPAVSPRPS). Over residues 285 to 304 (RPGAPTRPGTGAGRPSRPGG) the composition is skewed to low complexity. Residues 320–339 (GNRGEGGRPPGGARPAGGGN) show a composition bias toward gly residues. Positions 388–403 (ATPPVSRPTATPPSPA) are enriched in pro residues. Gly residues predominate over residues 412-422 (FRPGAGPGGQR). Basic and acidic residues predominate over residues 425 to 439 (GRPDWDDSAKLDALR). A compositionally biased stretch (low complexity) spans 486 to 499 (PKSQQKAAPKPVAA). A compositionally biased stretch (basic residues) spans 500–512 (MRKRRKETTRQRQ). In terms of domain architecture, tr-type G spans 615 to 787 (RRPPVVTVMG…LLLVTEVEDL (173 aa)). Residues 624–631 (GHVDHGKT) form a G1 region. Position 624 to 631 (624 to 631 (GHVDHGKT)) interacts with GTP. Positions 649–653 (GITQH) are G2. A G3 region spans residues 674–677 (DTPG). GTP is bound by residues 674 to 678 (DTPGH) and 728 to 731 (NKID). The segment at 728–731 (NKID) is G4. The tract at residues 764–766 (SAI) is G5.

This sequence belongs to the TRAFAC class translation factor GTPase superfamily. Classic translation factor GTPase family. IF-2 subfamily.

The protein resides in the cytoplasm. Its function is as follows. One of the essential components for the initiation of protein synthesis. Protects formylmethionyl-tRNA from spontaneous hydrolysis and promotes its binding to the 30S ribosomal subunits. Also involved in the hydrolysis of GTP during the formation of the 70S ribosomal complex. The chain is Translation initiation factor IF-2 from Synechococcus sp. (strain WH7803).